Here is an 864-residue protein sequence, read N- to C-terminus: Leucine--tRNA ligase (864 aa).

Positions 42 to 52 match the 'HIGH' region motif; the sequence is PYPSGKLHMGH. A 'KMSKS' region motif is present at residues 624–628; it reads KMSKS. Lysine 627 contacts ATP.

This sequence belongs to the class-I aminoacyl-tRNA synthetase family.

Its subcellular location is the cytoplasm. The catalysed reaction is tRNA(Leu) + L-leucine + ATP = L-leucyl-tRNA(Leu) + AMP + diphosphate. The protein is Leucine--tRNA ligase of Burkholderia thailandensis (strain ATCC 700388 / DSM 13276 / CCUG 48851 / CIP 106301 / E264).